The sequence spans 128 residues: Protein C10 (128 aa).

It belongs to the UPF0456 family.

The protein resides in the cytoplasm. This is Protein C10 from Xenopus laevis (African clawed frog).